The primary structure comprises 217 residues: 3-demethoxyubiquinol 3-hydroxylase (217 aa).

Fe cation-binding residues include glutamate 66, glutamate 96, histidine 99, glutamate 148, glutamate 180, and histidine 183.

The protein belongs to the COQ7 family. Requires Fe cation as cofactor.

It is found in the cell membrane. The catalysed reaction is a 5-methoxy-2-methyl-3-(all-trans-polyprenyl)benzene-1,4-diol + AH2 + O2 = a 3-demethylubiquinol + A + H2O. Its pathway is cofactor biosynthesis; ubiquinone biosynthesis. Functionally, catalyzes the hydroxylation of 2-nonaprenyl-3-methyl-6-methoxy-1,4-benzoquinol during ubiquinone biosynthesis. The sequence is that of 3-demethoxyubiquinol 3-hydroxylase from Xanthomonas oryzae pv. oryzae (strain MAFF 311018).